The chain runs to 846 residues: Disks large-associated protein 5 (846 aa).

Position 67 is a phosphoserine; by CDK1 (S67). Residues 90-120 are a coiled coil; the sequence is RKQMLQKYKEEKQLQKLKEQREKAKRGIFKV. The disordered stretch occupies residues 153-284; it reads TRSKAKDQME…TNATSGMNPD (132 aa). Basic and acidic residues-rich tracts occupy residues 156 to 174 and 182 to 194; these read KAKD…DVRA and TSEK…EKKV. S202 is modified (phosphoserine). Over residues 203 to 225 the composition is skewed to polar residues; that stretch reads LRMTRSATQAAKQVPRTVSSTTA. Residues 250-266 show a composition bias toward basic and acidic residues; it reads KNVETKPDKGISCKVDS. Residues 269-281 are compositionally biased toward polar residues; that stretch reads NTLNSQTNATSGM. T326 bears the Phosphothreonine mark. A Phosphothreonine; by CDK1 modification is found at T329. T338 carries the phosphothreonine modification. A Glycyl lysine isopeptide (Lys-Gly) (interchain with G-Cter in SUMO2) cross-link involves residue K347. 2 positions are modified to phosphothreonine; by CDK1: T401 and T402. The residue at position 618 (S618) is a Phosphoserine; by CDK1. S627 carries the post-translational modification Phosphoserine; by AURKA. The segment covering 628-671 has biased composition (polar residues); the sequence is VSSEGPSQRLGTPKSVNKAVSQSRNEMGIPQQTTSPENAGPQNT. The segment at 628 to 674 is disordered; it reads VSSEGPSQRLGTPKSVNKAVSQSRNEMGIPQQTTSPENAGPQNTKSE. Phosphoserine occurs at positions 629 and 634. T639 carries the post-translational modification Phosphothreonine; by CDK1. The residue at position 642 (S642) is a Phosphoserine; by CDK1. S662 carries the post-translational modification Phosphoserine. Phosphoserine; by AURKA is present on residues S725 and S757. T759 is subject to Phosphothreonine; by CDK1. Residues S774 and S777 each carry the phosphoserine modification. T784 carries the phosphothreonine modification. Phosphoserine occurs at positions 806 and 812. At S830 the chain carries Phosphoserine; by AURKA. S839 is subject to Phosphoserine; by CDK1.

The protein belongs to the SAPAP family. Interacts with CDK1. Interacts with the C-terminal proline-rich region of FBXO7. Recruited by FBXO7 to a SCF (SKP1-CUL1-F-box) protein complex in a CDK1/Cyclin B-phosphorylation dependent manner. Interacts with CDH1. Ubiquitinated, leading to its degradation. Post-translationally, decreased phosphorylation levels are associated with the differentiation of intestinal epithelial cells. Abundantly expressed in fetal liver. Expressed at lower levels in bone marrow, testis, colon, and placenta.

It localises to the nucleus. It is found in the cytoplasm. Its subcellular location is the cytoskeleton. The protein resides in the spindle. In terms of biological role, potential cell cycle regulator that may play a role in carcinogenesis of cancer cells. Mitotic phosphoprotein regulated by the ubiquitin-proteasome pathway. Key regulator of adherens junction integrity and differentiation that may be involved in CDH1-mediated adhesion and signaling in epithelial cells. The chain is Disks large-associated protein 5 (DLGAP5) from Homo sapiens (Human).